We begin with the raw amino-acid sequence, 164 residues long: MKDFESLKFQINELVNKELEVLNLKVYQINNLKEFENDMIQILVEDSLQANKPLDFDILIKANDLVSNKIDQLIKTKDKYLLEISSSGIEKQIRSQEELLKALEQWVYVQLNNEIKKVKEFEGYVTKYNDQTNTFTFSFFIKGQKKNLDVKFDDIKFIRYAVRF.

It belongs to the RimP family.

It is found in the cytoplasm. In terms of biological role, required for maturation of 30S ribosomal subunits. The polypeptide is Ribosome maturation factor RimP (Mycoplasma mycoides subsp. mycoides SC (strain CCUG 32753 / NCTC 10114 / PG1)).